Here is a 205-residue protein sequence, read N- to C-terminus: MNSLDYNKTNFLKSYSKITDIDIQNGIEIAFIGYSNTGKSSAINALTNQKKLARFSKTPGRTQLINFFEVVSGFRIVDLPGYGYSQAPLLVRSKWQKKVYDYLEKREQIKLFVLLMDIRYPLKKLDQKIISIAVQKKISILVLLTKCDKIKINHQKNQADMVFKKLNVLLDSFEIILFSSYKKIGIEKLKLSLNSSYKKHFILNR.

One can recognise an EngB-type G domain in the interval 25-199; that stretch reads NGIEIAFIGY…KLSLNSSYKK (175 aa). Residues 33–40, 60–64, 78–81, 145–148, and 178–180 contribute to the GTP site; these read GYSNTGKS, GRTQL, DLPG, TKCD, and FSS. The Mg(2+) site is built by serine 40 and threonine 62.

The protein belongs to the TRAFAC class TrmE-Era-EngA-EngB-Septin-like GTPase superfamily. EngB GTPase family. Requires Mg(2+) as cofactor.

In terms of biological role, necessary for normal cell division and for the maintenance of normal septation. In Buchnera aphidicola subsp. Acyrthosiphon pisum (strain 5A), this protein is Probable GTP-binding protein EngB.